The following is a 69-amino-acid chain: Pancreatic secretory trypsin inhibitor (69 aa).

In terms of domain architecture, Kazal-like spans 8-65 (TGTEAACSNYDLKKGCAKIFDPVCGTDNILYSNECLLCFQNLQRKTNVRIKRRGTCQE). Disulfide bonds link Cys14/Cys45, Cys23/Cys42, and Cys31/Cys63.

The protein resides in the secreted. This is a trypsin inhibitor, its physiological function is to prevent the trypsin-catalyzed premature activation of zymogens within the pancreas. The protein is Pancreatic secretory trypsin inhibitor (SPINK1) of Struthio camelus (Common ostrich).